Here is a 338-residue protein sequence, read N- to C-terminus: Tetraacyldisaccharide 4'-kinase (338 aa).

53-60 (VAGGAGKT) is an ATP binding site.

The protein belongs to the LpxK family.

It carries out the reaction a lipid A disaccharide + ATP = a lipid IVA + ADP + H(+). Its pathway is glycolipid biosynthesis; lipid IV(A) biosynthesis; lipid IV(A) from (3R)-3-hydroxytetradecanoyl-[acyl-carrier-protein] and UDP-N-acetyl-alpha-D-glucosamine: step 6/6. Its function is as follows. Transfers the gamma-phosphate of ATP to the 4'-position of a tetraacyldisaccharide 1-phosphate intermediate (termed DS-1-P) to form tetraacyldisaccharide 1,4'-bis-phosphate (lipid IVA). The polypeptide is Tetraacyldisaccharide 4'-kinase (Polaromonas sp. (strain JS666 / ATCC BAA-500)).